The sequence spans 637 residues: Probable membrane transporter protein MamO (637 aa).

Residues 1–24 (MIEVGETMGELPTNKIVFCERSWK) are Cytoplasmic-facing. The helical transmembrane segment at 25 to 45 (TPVSILAFLIFVTFAWGIYLL) threads the bilayer. Residues 46-352 (DHYDEDDNFH…AKIGGYSVAD (307 aa)) lie on the Lumenal side of the membrane. The protease-like stretch occupies residues 78 to 268 (LYHTVPPAVV…VIVSHLQDVV (191 aa)). Residues H148 and H263 each contribute to the a divalent metal cation site. Residues 353 to 373 (IVGLVMLALAAGVTGGMMTMG) traverse the membrane as a helical segment. The segment at 370-637 (MTMGGGVLQV…AIALKMLTSV (268 aa)) is TSUP-like. Residues 374 to 378 (GGVLQ) lie on the Cytoplasmic side of the membrane. Residues 379-399 (VAGMMVFFGYGMYLIRPVVFL) traverse the membrane as a helical segment. The Lumenal portion of the chain corresponds to 400 to 416 (TNVVVYGAASLRNDKAQ). Residues 417 to 437 (LVQWDKVKPLIPWGIAGVILG) form a helical membrane-spanning segment. Position 438 (Y438) is a topological domain, cytoplasmic. A helical membrane pass occupies residues 439 to 459 (FIGNAIGDSVVGILLGLFALI). The Lumenal portion of the chain corresponds to 460-517 (MAGKAVMEILQPNAGEETAESISATEAEDEMDELMALADGTSRPKASGLALPEGHARS). Residues 518 to 538 (AVLGLPMGLFSGILGISGGVI) form a helical membrane-spanning segment. Residues 539-554 (EVPLQRYVGRISLQNA) are Cytoplasmic-facing. A helical membrane pass occupies residues 555–575 (IANSSVLVFWASVAGSVVAFL). Residues 576-586 (HGSSTGLIHWE) lie on the Lumenal side of the membrane. A helical transmembrane segment spans residues 587–607 (APVTLALVMIPGAYVGGIIGA). The Cytoplasmic segment spans residues 608–616 (RLMRVLPVR). A helical transmembrane segment spans residues 617 to 637 (VLKGVYAATMAAIALKMLTSV).

In the N-terminal section; belongs to the peptidase S1C family. The protein in the C-terminal section; belongs to the 4-toluene sulfonate uptake permease (TSUP) (TC 2.A.102) family. The cofactor is a metal cation. Post-translationally, subject to proteolytic cleavage by MamE.

The protein resides in the magnetosome membrane. In terms of biological role, plays 2 roles; promotes magnetite nucleation/formation and activates the MamE protease. Despite its near conservation of a protease-like sequence, this is probably not a protease. Required in conjunction with MamP for proteolysis of at least MamE, itself and MamP. May transport a solute that controls MamE's protease activity. May place individual iron atoms into the magnetite lattice. The chain is Probable membrane transporter protein MamO (mamO) from Paramagnetospirillum magneticum (strain ATCC 700264 / AMB-1) (Magnetospirillum magneticum).